Reading from the N-terminus, the 563-residue chain is Inositol-3-phosphate synthase 1-A (563 aa).

It belongs to the myo-inositol 1-phosphate synthase family. NAD(+) is required as a cofactor.

The protein resides in the cytoplasm. The catalysed reaction is D-glucose 6-phosphate = 1D-myo-inositol 3-phosphate. The protein operates within polyol metabolism; myo-inositol biosynthesis; myo-inositol from D-glucose 6-phosphate: step 1/2. Functionally, key enzyme in myo-inositol biosynthesis pathway that catalyzes the conversion of glucose 6-phosphate to 1-myo-inositol 1-phosphate in a NAD-dependent manner. Rate-limiting enzyme in the synthesis of all inositol-containing compounds. This Xenopus laevis (African clawed frog) protein is Inositol-3-phosphate synthase 1-A (isyna1-a).